Reading from the N-terminus, the 1151-residue chain is MRKFNIRKVLDGLTAGSSSASQQQQQQHPPGNREPEIQETLQSEHFQLCKTVRHGFPYQPSALAFDPVQKILAVGTQTGALRLFGRPGVECYCQHDSGAAVIQLQFLINEGALVSALADDTLHLWNLRQKRPAILHSLKFCRERVTFCHLPFQSKWLYVGTERGNIHIVNVESFTLSGYVIMWNKAIELSSKSHPGPVVHISDNPMDEGKLLIGFESGTVVLWDLKSKKADYRYTYDEAIHSVAWHHEGKQFICSHSDGTLTIWNVRSPAKPVQTITPHGKQLKDGKKPEPCKPILKVEFKTTRSGEPFIILSGGLSYDTVGRRPCLTVMHGKSTAVLEMDYSIVDFLTLCETPYPNDFQEPYAVVVLLEKDLVLIDLAQNGYPIFENPYPLSIHESPVTCCEYFADCPVDLIPALYSVGARQKRQGYSKKEWPINGGNWGLGAQSYPEIIITGHADGSVKFWDASAITLQVLYKLKTSKVFEKSRNKDDRPNTDIVDEDPYAIQIISWCPESRMLCIAGVSAHVIIYRFSKQEVITEVIPMLEVRLLYEINDVETPEGEQPPPLPTPVGGSNPQPIPPQSHPSTSSSSSDGLRDNVPCLKVKNSPLKQSPGYQTELVIQLVWVGGEPPQQITSLAVNSSYGLVVFGNCNGIAMVDYLQKAVLLNLGTIELYGSNDPYRREPRSPRKSRQPSGAGLCDISEGTVVPEDRCKSPTSGSSSPHNSDDEQKMNNFIEKVKTKSRKFSKMVANDIAKMSRKLSLPTDLKPDLDVKDNSFSRSRSSSVTSIDKESREAISALHFCETFTRKTDSSPSPCLWVGTTLGTVLVIALNLPPGGEQRLLQPVIVSPSGTILRLKGAILRMAFLDTTGCLIPPAYEPWREHNVPEEKDEKEKLKKRRPVSVSPSSSQEISENQYAVICSEKQAKVISLPTQNCAYKQNITETSFVLRGDIVALSNSICLACFCANGHIMTFSLPSLRPLLDVYYLPLTNMRIARTFCFTNNGQALYLVSPTEIQRLTYSQETCENLQEMLGELFTPVETPEAPNRGFFKGLFGGGAQSLDREELFGESSSGKASRSLAQHIPGPGGIEGVKGAASGVVGELARARLALDERGQKLGDLEERTAAMLSSAESFSKHAHEIMLKYKDKKWYQF.

Residues 14–34 form a disordered region; sequence TAGSSSASQQQQQQHPPGNRE. The segment covering 17–27 has biased composition (low complexity); that stretch reads SSSASQQQQQQ. 10 WD repeats span residues 61-94, 101-140, 145-181, 200-234, 240-272, 294-336, 344-378, 400-477, 505-619, and 633-695; these read SALA…CYCQ, VIQL…SLKF, VTFC…GYVI, HISD…DYRY, IHSV…PAKP, PILK…KSTA, IVDF…LIDL, TCCE…YKLK, QIIS…ELVI, and TSLA…SGAG. Disordered regions lie at residues 555–595 and 674–729; these read ETPE…GLRD and SNDP…EQKM. At S692 the chain carries Phosphoserine. Over residues 712–721 the composition is skewed to low complexity; the sequence is SPTSGSSSPH. S723 carries the phosphoserine; by PKA modification. S759 is subject to Phosphoserine. Residue T762 is modified to Phosphothreonine. S782 carries the post-translational modification Phosphoserine. T784 is subject to Phosphothreonine. Residue S785 is modified to Phosphoserine. WD repeat units lie at residues 794–851, 860–934, 939–983, and 997–1020; these read ISAL…SGTI, RMAF…QNCA, ITET…LDVY, and CFTN…TYSQ. Basic and acidic residues predominate over residues 881–892; that stretch reads HNVPEEKDEKEK. Residues 881 to 906 form a disordered region; sequence HNVPEEKDEKEKLKKRRPVSVSPSSS. Residues S900 and S902 each carry the phosphoserine modification. A Phosphothreonine modification is found at T1039. Phosphoserine occurs at positions 1058 and 1131. One can recognise a v-SNARE coiled-coil homology domain in the interval 1086–1146; that stretch reads GIEGVKGAAS…HEIMLKYKDK (61 aa).

It belongs to the WD repeat L(2)GL family. As to quaternary structure, interacts with STX1A and STX1B via its v-SNARE homology domain. Part of a complex that contains STX1, STXBP5, SNAP25 and SYT1. Part of a complex that contains STXBP5, STX4A and SNAP23.

Its subcellular location is the cytoplasm. The protein resides in the cell membrane. The protein localises to the cytoplasmic vesicle membrane. It localises to the cytoplasmic vesicle. It is found in the secretory vesicle. Its subcellular location is the synaptic vesicle. The protein resides in the synapse. Functionally, plays a regulatory role in calcium-dependent exocytosis and neurotransmitter release. Inhibits membrane fusion between transport vesicles and the plasma membrane. May modulate the assembly of trans-SNARE complexes between transport vesicles and the plasma membrane. Inhibits translocation of GLUT4 from intracellular vesicles to the plasma membrane. Competes with STXBP1 for STX1 binding. This chain is Syntaxin-binding protein 5 (STXBP5), found in Homo sapiens (Human).